The sequence spans 416 residues: MAYFLEQSDSEIFELIFEEFKRQNEHLEMIASENYTFASVMEAMGSILTNKYAEGYPNKRYYGGCEVVDKVESLAIERAKKLFNCQFANVQAHSGSQANNAVYHALLKPYDKILGMDLSCGGHLTHGAKVSLTGKHYQSFSYGVGLDGYIDYGETLKIAQSVKPQIIVCGFSAYPREIDFKKFREIADEVGALLLGDIAHVAGLVVASEHAHPFPHCHVVSSTTHKTLRGPRGGLILTNDEEIAAKIDKAIFPGTQGGPLMHAIAAKAVGFKENLKPEFKTYAKLVKSNMQVLAKVLKEKNHKLVSDGTSNHLLLMDFLNKPYSGKDADIALGNAGITVNKNTIPGETRSPFVTSGIRIGSAALSARGMGTKEFEIIGNKISDILNDINNVSLQLHVKEELKAMASQFPVYHQPIF.

(6S)-5,6,7,8-tetrahydrofolate-binding positions include Leu118 and 122–124 (GHL). The residue at position 226 (Lys226) is an N6-(pyridoxal phosphate)lysine. (6S)-5,6,7,8-tetrahydrofolate contacts are provided by residues Glu242 and 350–352 (SPF).

Belongs to the SHMT family. Homodimer. It depends on pyridoxal 5'-phosphate as a cofactor.

Its subcellular location is the cytoplasm. The enzyme catalyses (6R)-5,10-methylene-5,6,7,8-tetrahydrofolate + glycine + H2O = (6S)-5,6,7,8-tetrahydrofolate + L-serine. Its pathway is one-carbon metabolism; tetrahydrofolate interconversion. It participates in amino-acid biosynthesis; glycine biosynthesis; glycine from L-serine: step 1/1. Its function is as follows. Catalyzes the reversible interconversion of serine and glycine with tetrahydrofolate (THF) serving as the one-carbon carrier. This reaction serves as the major source of one-carbon groups required for the biosynthesis of purines, thymidylate, methionine, and other important biomolecules. Also exhibits THF-independent aldolase activity toward beta-hydroxyamino acids, producing glycine and aldehydes, via a retro-aldol mechanism. This Helicobacter acinonychis (strain Sheeba) protein is Serine hydroxymethyltransferase.